The chain runs to 459 residues: Glycosyl hydrolase family 109 protein (459 aa).

The segment at residues 1–31 is a signal peptide (tat-type signal); sequence MHNIHRRNFLKAAGAATAGLVTANIALNAYA. NAD(+) is bound by residues 64–65, aspartate 86, 135–138, 155–156, and asparagine 184; these read ER, WEWH, and EV. Substrate-binding positions include tyrosine 213, arginine 232, 244 to 247, and tyrosine 326; that span reads YPTH. Tyrosine 244 lines the NAD(+) pocket.

Belongs to the Gfo/Idh/MocA family. Glycosyl hydrolase 109 subfamily. NAD(+) is required as a cofactor. Post-translationally, predicted to be exported by the Tat system. The position of the signal peptide cleavage has not been experimentally proven.

In terms of biological role, glycosidase. In Shewanella baltica (strain OS195), this protein is Glycosyl hydrolase family 109 protein.